The following is a 660-amino-acid chain: Bifunctional polymyxin resistance protein ArnA (660 aa).

Positions 1–304 are formyltransferase ArnAFT; it reads MKAIVFAYHD…DMSMVTDVRV (304 aa). The active-site Proton donor; for formyltransferase activity is the His-104. (6R)-10-formyltetrahydrofolate contacts are provided by residues Arg-114 and 136-140; that span reads VLKPD. Residues 314 to 660 form a dehydrogenase ArnADH region; it reads HRKRVLILGV…RGAVEELGKN (347 aa). NAD(+) is bound by residues Asp-347 and 368–369; that span reads DI. Residues Ala-393, Tyr-398, and 432–433 each bind UDP-alpha-D-glucuronate; that span reads TS. Glu-434 (proton acceptor; for decarboxylase activity) is an active-site residue. UDP-alpha-D-glucuronate is bound by residues Arg-460, Asn-492, 526–535, and Tyr-613; that span reads KLVDGGEQKR. The Proton donor; for decarboxylase activity role is filled by Arg-619.

It in the N-terminal section; belongs to the Fmt family. UDP-L-Ara4N formyltransferase subfamily. In the C-terminal section; belongs to the NAD(P)-dependent epimerase/dehydratase family. UDP-glucuronic acid decarboxylase subfamily. Homohexamer, formed by a dimer of trimers.

The enzyme catalyses UDP-alpha-D-glucuronate + NAD(+) = UDP-beta-L-threo-pentopyranos-4-ulose + CO2 + NADH. The catalysed reaction is UDP-4-amino-4-deoxy-beta-L-arabinose + (6R)-10-formyltetrahydrofolate = UDP-4-deoxy-4-formamido-beta-L-arabinose + (6S)-5,6,7,8-tetrahydrofolate + H(+). It functions in the pathway nucleotide-sugar biosynthesis; UDP-4-deoxy-4-formamido-beta-L-arabinose biosynthesis; UDP-4-deoxy-4-formamido-beta-L-arabinose from UDP-alpha-D-glucuronate: step 1/3. It participates in nucleotide-sugar biosynthesis; UDP-4-deoxy-4-formamido-beta-L-arabinose biosynthesis; UDP-4-deoxy-4-formamido-beta-L-arabinose from UDP-alpha-D-glucuronate: step 3/3. The protein operates within bacterial outer membrane biogenesis; lipopolysaccharide biosynthesis. Bifunctional enzyme that catalyzes the oxidative decarboxylation of UDP-glucuronic acid (UDP-GlcUA) to UDP-4-keto-arabinose (UDP-Ara4O) and the addition of a formyl group to UDP-4-amino-4-deoxy-L-arabinose (UDP-L-Ara4N) to form UDP-L-4-formamido-arabinose (UDP-L-Ara4FN). The modified arabinose is attached to lipid A and is required for resistance to polymyxin and cationic antimicrobial peptides. The sequence is that of Bifunctional polymyxin resistance protein ArnA from Photorhabdus laumondii subsp. laumondii (strain DSM 15139 / CIP 105565 / TT01) (Photorhabdus luminescens subsp. laumondii).